We begin with the raw amino-acid sequence, 72 residues long: UPF0346 protein GTNG_1419 (72 aa).

Belongs to the UPF0346 family.

The protein is UPF0346 protein GTNG_1419 of Geobacillus thermodenitrificans (strain NG80-2).